A 431-amino-acid chain; its full sequence is Glutamate-1-semialdehyde 2,1-aminomutase (431 aa).

Lys-269 bears the N6-(pyridoxal phosphate)lysine mark.

This sequence belongs to the class-III pyridoxal-phosphate-dependent aminotransferase family. HemL subfamily. Homodimer. The cofactor is pyridoxal 5'-phosphate.

The protein resides in the cytoplasm. It carries out the reaction (S)-4-amino-5-oxopentanoate = 5-aminolevulinate. The protein operates within porphyrin-containing compound metabolism; protoporphyrin-IX biosynthesis; 5-aminolevulinate from L-glutamyl-tRNA(Glu): step 2/2. It functions in the pathway porphyrin-containing compound metabolism; chlorophyll biosynthesis. The polypeptide is Glutamate-1-semialdehyde 2,1-aminomutase (Chlorobium phaeovibrioides (strain DSM 265 / 1930) (Prosthecochloris vibrioformis (strain DSM 265))).